We begin with the raw amino-acid sequence, 172 residues long: Type IV secretion system putative outer membrane lipoprotein BMEII0036 (172 aa).

Positions 1-15 are cleaved as a signal peptide; sequence MRTLVMVACAVSLAA. The N-palmitoyl cysteine moiety is linked to residue Cys-16. A lipid anchor (S-diacylglycerol cysteine) is attached at Cys-16. The 115-residue stretch at 58–172 folds into the OmpA-like domain; the sequence is WPARPPKQTV…RRVDIEILRK (115 aa).

It is found in the cell outer membrane. In Brucella melitensis biotype 1 (strain ATCC 23456 / CCUG 17765 / NCTC 10094 / 16M), this protein is Type IV secretion system putative outer membrane lipoprotein BMEII0036.